We begin with the raw amino-acid sequence, 476 residues long: UDP-N-acetylmuramate--L-alanine ligase (476 aa).

125–131 (GTHGKTT) provides a ligand contact to ATP.

It belongs to the MurCDEF family.

It localises to the cytoplasm. It catalyses the reaction UDP-N-acetyl-alpha-D-muramate + L-alanine + ATP = UDP-N-acetyl-alpha-D-muramoyl-L-alanine + ADP + phosphate + H(+). It participates in cell wall biogenesis; peptidoglycan biosynthesis. Functionally, cell wall formation. The protein is UDP-N-acetylmuramate--L-alanine ligase of Actinobacillus succinogenes (strain ATCC 55618 / DSM 22257 / CCUG 43843 / 130Z).